Reading from the N-terminus, the 540-residue chain is H(+)/hexose cotransporter 2 (540 aa).

The Cytoplasmic segment spans residues 1–29 (MAGGGPVASTTTNRASQYGYARGGLNWYI). A helical membrane pass occupies residues 30-50 (FIVALTAGSGGLLFGYDIGVT). Topologically, residues 51–90 (GGVTSMPEFLQKFFPSIYDRTQQPSDSKDPYCTYDDQKLQ) are extracellular. The chain crosses the membrane as a helical span at residues 91–111 (LFTSSFFLAGMFVSFFAGSVV). The Cytoplasmic portion of the chain corresponds to 112–124 (RRWGRKPTMLIAS). The helical transmembrane segment at 125–135 (VLFLAGAGLNA) threads the bilayer. Residues 136 to 147 (GAQDLAMLVIGR) lie on the Extracellular side of the membrane. Residues 148–168 (VLLGFGVGGGNNAVPLYLSEC) form a helical membrane-spanning segment. At 169 to 176 (APPKYRGG) the chain is on the cytoplasmic side. A helical membrane pass occupies residues 177–197 (LNMMFQLAVTIGIIVAQLVNY). The Extracellular segment spans residues 198-207 (GTQTMNNGWR). A helical membrane pass occupies residues 208–228 (LSLGLAGVPAIILLIGSLLLP). Topologically, residues 229–296 (ETPNSLIERG…YSPMLIVTSL (68 aa)) are cytoplasmic. Residues 297-317 (IAMLQQLTGINAIMFYVPVLF) form a helical membrane-spanning segment. Topologically, residues 318–326 (SSFGTARHA) are extracellular. A helical transmembrane segment spans residues 327 to 337 (ALLNTVIIGAV). Residues 338-355 (NVAATFVSIFSVDKFGRR) are Cytoplasmic-facing. Residues 356–376 (GLFLEGGIQMFIGQVVTAAVL) traverse the membrane as a helical segment. The Extracellular portion of the chain corresponds to 377–396 (GVELNKYGTNLPSSTAAGVL). The helical transmembrane segment at 397–417 (VVICVYVAAFAWSWGPLGWLV) threads the bilayer. Over 418 to 435 (PSEIQTLETRGAGMSMAV) the chain is Cytoplasmic. The helical transmembrane segment at 436-456 (IVNFLFSFVIGQAFLSMMCAM) threads the bilayer. The Extracellular portion of the chain corresponds to 457–458 (RW). Residues 459–479 (GVFLFFAGWVVIMTFFVYFCL) traverse the membrane as a helical segment. The Cytoplasmic portion of the chain corresponds to 480-540 (PETKGVPVET…SEDGKPASDQ (61 aa)).

The protein belongs to the major facilitator superfamily. Sugar transporter (TC 2.A.1.1) family.

The protein resides in the membrane. Its function is as follows. Active uptake of galactose. In Parachlorella kessleri (Green alga), this protein is H(+)/hexose cotransporter 2 (HUP2).